The primary structure comprises 223 residues: 2-C-methyl-D-erythritol 4-phosphate cytidylyltransferase (223 aa).

Belongs to the IspD/TarI cytidylyltransferase family. IspD subfamily.

The enzyme catalyses 2-C-methyl-D-erythritol 4-phosphate + CTP + H(+) = 4-CDP-2-C-methyl-D-erythritol + diphosphate. Its pathway is isoprenoid biosynthesis; isopentenyl diphosphate biosynthesis via DXP pathway; isopentenyl diphosphate from 1-deoxy-D-xylulose 5-phosphate: step 2/6. Functionally, catalyzes the formation of 4-diphosphocytidyl-2-C-methyl-D-erythritol from CTP and 2-C-methyl-D-erythritol 4-phosphate (MEP). In Prochlorococcus marinus (strain AS9601), this protein is 2-C-methyl-D-erythritol 4-phosphate cytidylyltransferase.